The primary structure comprises 126 residues: Large ribosomal subunit protein bL20c (126 aa).

This sequence belongs to the bacterial ribosomal protein bL20 family.

Its subcellular location is the plastid. It localises to the chloroplast. In terms of biological role, binds directly to 23S ribosomal RNA and is necessary for the in vitro assembly process of the 50S ribosomal subunit. It is not involved in the protein synthesizing functions of that subunit. This chain is Large ribosomal subunit protein bL20c, found in Illicium oligandrum (Star anise).